Reading from the N-terminus, the 216-residue chain is MAQIIDLVPWDECSAHLYASPAVLLPLERVRHPLAGVKHQLYHPALPSLRRMDMDTVKGCLSDEHCQSSTYFSKDDFNKAHFTLLGVPNKPLQCLDFTATGQKLCHKYRGGKMIPIAPGINRVDWPCFTRAIEDWSKFVSRSEEFKLPCANKRVEGFSGYAVRYLKPEVTQNWRYCLNQNPSLDRYGQKPLPFDSLNAFRRFGSHYSRINYLTPWH.

In terms of assembly, microtubule inner protein component of sperm flagellar doublet microtubules. Expressed in testis.

The protein localises to the cytoplasm. Its subcellular location is the cytoskeleton. It is found in the flagellum axoneme. Functionally, microtubule inner protein (MIP) part of the dynein-decorated doublet microtubules (DMTs) in flagellum axoneme. May serve to reinforce and thus stabilize the microtubule structure in the sperm flagella. The protein is Sperm microtubule inner protein 8 (Spmip8) of Mus musculus (Mouse).